Reading from the N-terminus, the 1482-residue chain is Chromosome partition protein MukB (1482 aa).

ATP is bound at residue 34–41 (GGNGAGKS). 6 coiled-coil regions span residues 337–418 (LNLV…QYQQ), 444–472 (LDTYQAKEQEATERLLSLEQKMSVAQTAH), 509–601 (RHLA…TSHA), 781–805 (AARESRIESLHAEREALSERYATLS), 835–1116 (EAEI…AKAG), and 1210–1265 (EAIE…LQSV). The flexible hinge stretch occupies residues 666 to 783 (PGGAEDARLN…SVPLFGRAAR (118 aa)). The segment at 1049–1077 (ADAGAEERARQRRDELHTRLSNNRSRRNQ) is disordered. Over residues 1051–1066 (AGAEERARQRRDELHT) the composition is skewed to basic and acidic residues.

The protein belongs to the SMC family. MukB subfamily. In terms of assembly, homodimerization via its hinge domain. Binds to DNA via its C-terminal region. Interacts, and probably forms a ternary complex, with MukE and MukF via its C-terminal region. The complex formation is stimulated by calcium or magnesium. Interacts with tubulin-related protein FtsZ.

It is found in the cytoplasm. The protein resides in the nucleoid. Functionally, plays a central role in chromosome condensation, segregation and cell cycle progression. Functions as a homodimer, which is essential for chromosome partition. Involved in negative DNA supercoiling in vivo, and by this means organize and compact chromosomes. May achieve or facilitate chromosome segregation by condensation DNA from both sides of a centrally located replisome during cell division. This chain is Chromosome partition protein MukB, found in Cronobacter sakazakii (strain ATCC BAA-894) (Enterobacter sakazakii).